The primary structure comprises 173 residues: Crossover junction endodeoxyribonuclease RuvC (173 aa).

Residues aspartate 8, glutamate 67, and aspartate 139 contribute to the active site. The Mg(2+) site is built by aspartate 8, glutamate 67, and aspartate 139.

This sequence belongs to the RuvC family. Homodimer which binds Holliday junction (HJ) DNA. The HJ becomes 2-fold symmetrical on binding to RuvC with unstacked arms; it has a different conformation from HJ DNA in complex with RuvA. In the full resolvosome a probable DNA-RuvA(4)-RuvB(12)-RuvC(2) complex forms which resolves the HJ. It depends on Mg(2+) as a cofactor.

The protein localises to the cytoplasm. The catalysed reaction is Endonucleolytic cleavage at a junction such as a reciprocal single-stranded crossover between two homologous DNA duplexes (Holliday junction).. Functionally, the RuvA-RuvB-RuvC complex processes Holliday junction (HJ) DNA during genetic recombination and DNA repair. Endonuclease that resolves HJ intermediates. Cleaves cruciform DNA by making single-stranded nicks across the HJ at symmetrical positions within the homologous arms, yielding a 5'-phosphate and a 3'-hydroxyl group; requires a central core of homology in the junction. The consensus cleavage sequence is 5'-(A/T)TT(C/G)-3'. Cleavage occurs on the 3'-side of the TT dinucleotide at the point of strand exchange. HJ branch migration catalyzed by RuvA-RuvB allows RuvC to scan DNA until it finds its consensus sequence, where it cleaves and resolves the cruciform DNA. In Proteus mirabilis (strain HI4320), this protein is Crossover junction endodeoxyribonuclease RuvC.